The chain runs to 121 residues: CRISPR system Cms protein Csm2 (121 aa).

This sequence belongs to the CRISPR-associated Csm2 family. As to quaternary structure, part of the Csm effector complex that includes at least Cas10(1), Csm2(3), Csm3(5), Csm4(1), Csm5(1) and mature crRNA. The Csm complex is elongated and slightly twisted with a maximal length of 215 Angstroms and a diameter of 75-80 Angstroms. It has been modeled to have a central protein filamant of Csm3 subunits along which the dsRNA helix of paired crRNA and target RNA binds. The filament is capped at one end by Cas10 and Csm4 and at the other end by Csm5; ssDNA is thought to bind to the N-terminal HD domain of Cas10. Csm with a precursor crRNA does not include Csm5, while Cas6, the enzyme probably involved in pre-crRNA processing, is found associated with a subset of the Csm complex.

CRISPR (clustered regularly interspaced short palindromic repeat) is an adaptive immune system that provides protection against mobile genetic elements (viruses, transposable elements and conjugative plasmids). CRISPR clusters contain spacers, sequences complementary to antecedent mobile elements, and target invading nucleic acids. CRISPR clusters are transcribed and processed into CRISPR RNA (crRNA). The type III-A Csm effector complex binds crRNA and acts as a crRNA-guided RNase, DNase and cyclic oligoadenylate synthase; binding of target RNA cognate to the crRNA is required for all activities. In a heterologous host this Csm effector complex restricts ssRNA phage MS2, suggesting it may target RNA viruses in vivo. Its function is as follows. Csm functions as a non-specific ssDNase. Base-pairing between crRNA and target RNA to form a ternary Csm complex activates a ssDNase activity; target RNA cleavage suppresses the ssDNase, a temporal control that prevents uncontrolled DNA degradation. Viral RNA transcripts probably tether the Csm complex to the viral genome, recruiting Cas10 ssDNA activity which is able to degrade DNA in the transcription bubble, spatially controlling the DNase activity. In terms of biological role, this subunit may be involved in monitoring complementarity of crRNA and target RNA. The chain is CRISPR system Cms protein Csm2 from Streptococcus thermophilus.